The sequence spans 108 residues: Large ribosomal subunit protein eL32 (108 aa).

Over residues 21-30 (RRPRGRTSKM) the composition is skewed to basic residues. The tract at residues 21-44 (RRPRGRTSKMRRYEKGKPAMPAIG) is disordered.

The protein belongs to the eukaryotic ribosomal protein eL32 family.

This Methanothermobacter thermautotrophicus (strain ATCC 29096 / DSM 1053 / JCM 10044 / NBRC 100330 / Delta H) (Methanobacterium thermoautotrophicum) protein is Large ribosomal subunit protein eL32 (rpl32e).